Consider the following 216-residue polypeptide: Transmembrane protein 125 (216 aa).

Transmembrane regions (helical) follow at residues 32 to 52, 65 to 85, 111 to 131, and 144 to 164; these read LLCF…GVAL, LAVG…QLMS, AVVV…LAGL, and MLSV…GLLL.

The protein localises to the membrane. This chain is Transmembrane protein 125 (Tmem125), found in Mus musculus (Mouse).